The following is a 364-amino-acid chain: Protein Bop (364 aa).

Positions 66 to 88 (STASGTCGGKPAERGPLAGHMPS) are disordered. The BH3 signature appears at 114–128 (LDRFLAQLGDYMSFH). Positions 258–364 (QLTKESTPGP…PGEPPLSPGF (107 aa)) are disordered. Pro residues-rich tracts occupy residues 311–322 (AQRPDPAHPGGP) and 355–364 (PGEPPLSPGF).

As to quaternary structure, interacts (via BH3 domain) with VDAC1. Interacts with pro-survival Bcl-2 family members, BCL2, BCL2L1 isoform Bcl-X(L), MCL1, BCL2A1 and BCL2L2. Interacts with BAX and BAK1. In terms of tissue distribution, ubiquitously expressed.

Its subcellular location is the mitochondrion. Its function is as follows. Could induce apoptosis in a BH3 domain-dependent manner. The direct interaction network of Bcl-2 family members may play a key role in modulation RTL10/BOP intrinsic apoptotic signaling activity. The sequence is that of Protein Bop from Homo sapiens (Human).